A 423-amino-acid polypeptide reads, in one-letter code: D-tagatose-1,6-bisphosphate aldolase subunit GatZ (423 aa).

It belongs to the GatZ/KbaZ family. GatZ subfamily. Forms a complex with GatY.

It functions in the pathway carbohydrate metabolism; D-tagatose 6-phosphate degradation; D-glyceraldehyde 3-phosphate and glycerone phosphate from D-tagatose 6-phosphate: step 2/2. Component of the tagatose-1,6-bisphosphate aldolase GatYZ that is required for full activity and stability of the Y subunit. Could have a chaperone-like function for the proper and stable folding of GatY. When expressed alone, GatZ does not show any aldolase activity. Is involved in the catabolism of galactitol. The sequence is that of D-tagatose-1,6-bisphosphate aldolase subunit GatZ from Salmonella heidelberg (strain SL476).